We begin with the raw amino-acid sequence, 567 residues long: 2-succinyl-5-enolpyruvyl-6-hydroxy-3-cyclohexene-1-carboxylate synthase (567 aa).

It belongs to the TPP enzyme family. MenD subfamily. In terms of assembly, homodimer. Mg(2+) is required as a cofactor. Mn(2+) serves as cofactor. Requires thiamine diphosphate as cofactor.

The enzyme catalyses isochorismate + 2-oxoglutarate + H(+) = 5-enolpyruvoyl-6-hydroxy-2-succinyl-cyclohex-3-ene-1-carboxylate + CO2. It functions in the pathway quinol/quinone metabolism; 1,4-dihydroxy-2-naphthoate biosynthesis; 1,4-dihydroxy-2-naphthoate from chorismate: step 2/7. The protein operates within quinol/quinone metabolism; menaquinone biosynthesis. Its function is as follows. Catalyzes the thiamine diphosphate-dependent decarboxylation of 2-oxoglutarate and the subsequent addition of the resulting succinic semialdehyde-thiamine pyrophosphate anion to isochorismate to yield 2-succinyl-5-enolpyruvyl-6-hydroxy-3-cyclohexene-1-carboxylate (SEPHCHC). In Yersinia pestis bv. Antiqua (strain Angola), this protein is 2-succinyl-5-enolpyruvyl-6-hydroxy-3-cyclohexene-1-carboxylate synthase.